We begin with the raw amino-acid sequence, 567 residues long: Septation ring formation regulator EzrA (567 aa).

Over 1 to 2 the chain is Extracellular; it reads ME. A helical membrane pass occupies residues 3-21; the sequence is FIIGLIVILLALFSVGYFL. Residues 22 to 567 lie on the Cytoplasmic side of the membrane; the sequence is RKNIYKEIDR…AQQEKEYQHQ (546 aa). 3 coiled-coil regions span residues 108-185, 243-375, and 402-529; these read IEDL…YEEE, KGYK…RDHV, and KGHL…ERRF.

The protein belongs to the EzrA family.

The protein resides in the cell membrane. Negative regulator of FtsZ ring formation; modulates the frequency and position of FtsZ ring formation. Inhibits FtsZ ring formation at polar sites. Interacts either with FtsZ or with one of its binding partners to promote depolymerization. The chain is Septation ring formation regulator EzrA from Bacillus pumilus (strain SAFR-032).